A 332-amino-acid polypeptide reads, in one-letter code: tRNA-dihydrouridine(20/20a) synthase (332 aa).

FMN-binding positions include 20-22 (PMM) and Gln73. Cys103 serves as the catalytic Proton donor. FMN contacts are provided by residues Lys142, His174, 214 to 216 (NGG), and 236 to 237 (GR).

The protein belongs to the Dus family. DusA subfamily. FMN is required as a cofactor.

The catalysed reaction is 5,6-dihydrouridine(20) in tRNA + NADP(+) = uridine(20) in tRNA + NADPH + H(+). It carries out the reaction 5,6-dihydrouridine(20) in tRNA + NAD(+) = uridine(20) in tRNA + NADH + H(+). The enzyme catalyses 5,6-dihydrouridine(20a) in tRNA + NADP(+) = uridine(20a) in tRNA + NADPH + H(+). It catalyses the reaction 5,6-dihydrouridine(20a) in tRNA + NAD(+) = uridine(20a) in tRNA + NADH + H(+). In terms of biological role, catalyzes the synthesis of 5,6-dihydrouridine (D), a modified base found in the D-loop of most tRNAs, via the reduction of the C5-C6 double bond in target uridines. Specifically modifies U20 and U20a in tRNAs. This chain is tRNA-dihydrouridine(20/20a) synthase, found in Pseudomonas aeruginosa (strain ATCC 15692 / DSM 22644 / CIP 104116 / JCM 14847 / LMG 12228 / 1C / PRS 101 / PAO1).